Here is a 568-residue protein sequence, read N- to C-terminus: DNA mismatch repair protein MutL (568 aa).

The protein belongs to the DNA mismatch repair MutL/HexB family.

This protein is involved in the repair of mismatches in DNA. It is required for dam-dependent methyl-directed DNA mismatch repair. May act as a 'molecular matchmaker', a protein that promotes the formation of a stable complex between two or more DNA-binding proteins in an ATP-dependent manner without itself being part of a final effector complex. The protein is DNA mismatch repair protein MutL of Nostoc punctiforme (strain ATCC 29133 / PCC 73102).